We begin with the raw amino-acid sequence, 167 residues long: NADH-ubiquinone oxidoreductase chain 6 (167 aa).

The next 4 helical transmembrane spans lie at 24–44, 54–74, 85–105, and 135–155; these read PYFG…IILA, LLLI…ALVL, VLMK…GGYL, and WLLI…ILEI.

Belongs to the complex I subunit 6 family.

The protein resides in the mitochondrion membrane. It carries out the reaction a ubiquinone + NADH + 5 H(+)(in) = a ubiquinol + NAD(+) + 4 H(+)(out). In terms of biological role, core subunit of the mitochondrial membrane respiratory chain NADH dehydrogenase (Complex I) that is believed to belong to the minimal assembly required for catalysis. Complex I functions in the transfer of electrons from NADH to the respiratory chain. The immediate electron acceptor for the enzyme is believed to be ubiquinone. In Myxine glutinosa (Atlantic hagfish), this protein is NADH-ubiquinone oxidoreductase chain 6 (MT-ND6).